A 623-amino-acid polypeptide reads, in one-letter code: Phosphomethylpyrimidine synthase (623 aa).

Residues Asn221, Met250, Tyr279, His315, 335 to 337, 376 to 379, and Glu415 contribute to the substrate site; these read SRG and DGLR. A Zn(2+)-binding site is contributed by His419. Residue Tyr442 participates in substrate binding. His483 lines the Zn(2+) pocket. The [4Fe-4S] cluster site is built by Cys563, Cys566, and Cys571.

The protein belongs to the ThiC family. As to quaternary structure, homodimer. The cofactor is [4Fe-4S] cluster.

The enzyme catalyses 5-amino-1-(5-phospho-beta-D-ribosyl)imidazole + S-adenosyl-L-methionine = 4-amino-2-methyl-5-(phosphooxymethyl)pyrimidine + CO + 5'-deoxyadenosine + formate + L-methionine + 3 H(+). It functions in the pathway cofactor biosynthesis; thiamine diphosphate biosynthesis. Catalyzes the synthesis of the hydroxymethylpyrimidine phosphate (HMP-P) moiety of thiamine from aminoimidazole ribotide (AIR) in a radical S-adenosyl-L-methionine (SAM)-dependent reaction. The protein is Phosphomethylpyrimidine synthase of Parvibaculum lavamentivorans (strain DS-1 / DSM 13023 / NCIMB 13966).